A 228-amino-acid chain; its full sequence is Protein LIAT1 (228 aa).

Positions 1–108 (MAGRGGTGAA…RAEPRDKEEN (108 aa)) are disordered. Residues 12–24 (YGEEGEEEEEEEA) are compositionally biased toward acidic residues. Residues 49-71 (KRKVKKKKKKKKTKGSGKGDADK) form a lysine-rich domain region. Basic residues predominate over residues 50 to 63 (RKVKKKKKKKKTKG). Positions 90 to 108 (LNPHKDHGLRAEPRDKEEN) are enriched in basic and acidic residues. Positions 113–165 (PYSYSINHPCFAEIEDTLSSQINESLRWDGILTDPEAEKERIRIYKLNRRKRY) are interaction with ATE1. Residues 169-178 (ALKCFHSDPC) form repeat 1.

In terms of assembly, self-associates (via Lys-rich domain); targets LIAT1 to the nucleolus. Interacts with ATE1; it is not a substrate of ATE1, the interaction takes place in the cytoplasm and seems to increase ATE1 arginyltransferase activity. Interacts with JMJD6 and MRPS14. Post-translationally modified by JMJD6 lysyl-hydroxylase activity at its Lys-rich domain, which inhibits its self-association and nucleolar localization. In terms of tissue distribution, highly expressed in spleen, thymus, liver and brown adipose tissue. Moderately expressed in liver, testis and lung.

The protein resides in the nucleus. The protein localises to the nucleolus. Its subcellular location is the cytoplasm. In terms of biological role, participates in nucleolar liquid-liquid phase separation (LLPS) through its N-terminal intrinsically disordered region (IDR). May be involved in ATE1-mediated N-terminal arginylation. The sequence is that of Protein LIAT1 from Mus musculus (Mouse).